We begin with the raw amino-acid sequence, 373 residues long: Queuine tRNA-ribosyltransferase (373 aa).

The Proton acceptor role is filled by Asp-90. Substrate contacts are provided by residues 90–94 (DSGGF), Asp-144, Gln-193, and Gly-220. Residues 251-257 (GVGTPED) form an RNA binding region. Asp-270 (nucleophile) is an active-site residue. The interval 275 to 279 (TRNAR) is RNA binding; important for wobble base 34 recognition. Residues Cys-308, Cys-310, Cys-313, and His-339 each contribute to the Zn(2+) site.

This sequence belongs to the queuine tRNA-ribosyltransferase family. In terms of assembly, homodimer. Within each dimer, one monomer is responsible for RNA recognition and catalysis, while the other monomer binds to the replacement base PreQ1. The cofactor is Zn(2+).

The enzyme catalyses 7-aminomethyl-7-carbaguanine + guanosine(34) in tRNA = 7-aminomethyl-7-carbaguanosine(34) in tRNA + guanine. The protein operates within tRNA modification; tRNA-queuosine biosynthesis. In terms of biological role, catalyzes the base-exchange of a guanine (G) residue with the queuine precursor 7-aminomethyl-7-deazaguanine (PreQ1) at position 34 (anticodon wobble position) in tRNAs with GU(N) anticodons (tRNA-Asp, -Asn, -His and -Tyr). Catalysis occurs through a double-displacement mechanism. The nucleophile active site attacks the C1' of nucleotide 34 to detach the guanine base from the RNA, forming a covalent enzyme-RNA intermediate. The proton acceptor active site deprotonates the incoming PreQ1, allowing a nucleophilic attack on the C1' of the ribose to form the product. After dissociation, two additional enzymatic reactions on the tRNA convert PreQ1 to queuine (Q), resulting in the hypermodified nucleoside queuosine (7-(((4,5-cis-dihydroxy-2-cyclopenten-1-yl)amino)methyl)-7-deazaguanosine). The polypeptide is Queuine tRNA-ribosyltransferase (Campylobacter jejuni subsp. jejuni serotype O:2 (strain ATCC 700819 / NCTC 11168)).